The sequence spans 440 residues: 5-methylthioadenosine/S-adenosylhomocysteine deaminase (440 aa).

Residues His-70 and His-72 each coordinate Zn(2+). Residues Glu-99 and His-191 each coordinate substrate. His-218 contributes to the Zn(2+) binding site. Substrate contacts are provided by Glu-221 and Asp-306. Asp-306 contacts Zn(2+).

Belongs to the metallo-dependent hydrolases superfamily. MTA/SAH deaminase family. Zn(2+) is required as a cofactor.

It catalyses the reaction S-adenosyl-L-homocysteine + H2O + H(+) = S-inosyl-L-homocysteine + NH4(+). The catalysed reaction is S-methyl-5'-thioadenosine + H2O + H(+) = S-methyl-5'-thioinosine + NH4(+). In terms of biological role, catalyzes the deamination of 5-methylthioadenosine and S-adenosyl-L-homocysteine into 5-methylthioinosine and S-inosyl-L-homocysteine, respectively. Is also able to deaminate adenosine. The protein is 5-methylthioadenosine/S-adenosylhomocysteine deaminase of Nitratidesulfovibrio vulgaris (strain DSM 19637 / Miyazaki F) (Desulfovibrio vulgaris).